A 392-amino-acid polypeptide reads, in one-letter code: Acetyl-CoA acetyltransferase (392 aa).

Cys-87 serves as the catalytic Acyl-thioester intermediate. Active-site proton acceptor residues include His-348 and Cys-378.

It belongs to the thiolase-like superfamily. Thiolase family.

The protein resides in the cytoplasm. It catalyses the reaction 2 acetyl-CoA = acetoacetyl-CoA + CoA. It functions in the pathway metabolic intermediate biosynthesis; (R)-mevalonate biosynthesis; (R)-mevalonate from acetyl-CoA: step 1/3. In terms of biological role, involved in the production of polyhydroxyalkonic acids (PHAs), composed primarily of 3-hydroxybutyric acid (3HB) and 3-hydroxyvaleric acid (3HV). This chain is Acetyl-CoA acetyltransferase (phaA), found in Chromobacterium violaceum (strain ATCC 12472 / DSM 30191 / JCM 1249 / CCUG 213 / NBRC 12614 / NCIMB 9131 / NCTC 9757 / MK).